Reading from the N-terminus, the 231-residue chain is Enolase-phosphatase E1 (231 aa).

It belongs to the HAD-like hydrolase superfamily. MasA/MtnC family. As to quaternary structure, monomer. Requires Mg(2+) as cofactor.

The catalysed reaction is 5-methylsulfanyl-2,3-dioxopentyl phosphate + H2O = 1,2-dihydroxy-5-(methylsulfanyl)pent-1-en-3-one + phosphate. It participates in amino-acid biosynthesis; L-methionine biosynthesis via salvage pathway; L-methionine from S-methyl-5-thio-alpha-D-ribose 1-phosphate: step 3/6. Its pathway is amino-acid biosynthesis; L-methionine biosynthesis via salvage pathway; L-methionine from S-methyl-5-thio-alpha-D-ribose 1-phosphate: step 4/6. In terms of biological role, bifunctional enzyme that catalyzes the enolization of 2,3-diketo-5-methylthiopentyl-1-phosphate (DK-MTP-1-P) into the intermediate 2-hydroxy-3-keto-5-methylthiopentenyl-1-phosphate (HK-MTPenyl-1-P), which is then dephosphorylated to form the acireductone 1,2-dihydroxy-3-keto-5-methylthiopentene (DHK-MTPene). This chain is Enolase-phosphatase E1, found in Stenotrophomonas maltophilia (strain K279a).